A 632-amino-acid polypeptide reads, in one-letter code: MSASTSTSTAASQDACYISLLGLAEYFRTSQPPNIKKCIQCLQALFTFMPPSKVEARTHLQMGQILMAYTKNIDLARQHLEKAWSISEPLPNFDVKFDTASLLAQLHLQTDRNSHQAKAMLRRAVELSQNNVYWHCKLLLQLAQIHASDREYSLASELLAVGAESADEASATYLKVLFLLSRAMILMIERKTNDVLALLNSAGQIIDNNIPNPHQKEYLKVFFLVLQVCYYLALGQVKTVKPSLKQLQMSIQTIMAPNWPSDEAIFGANQLEMFVWLPKEQLYVLVYLVTVSHSMMAGYMDKAQKYTEKALTQIEKLKQQEDKPILSVFKVILLEHIVMCRMVMGNRELAIREIAAARDVCMAAPQRSLLRRHSAQLHCLIGLYSMSTNLFEHAERQFVVCVSETSERDLKLFANLNLAIIYLRTKRDTDLKQILDAVSTENTHTYSSQALMGGFYYVQGLHAFHKNSFHEAKRFLRETLKMANAEDLNRLTSCSLVLLSHVFLSIGNSKESMNMVTPAMQLASKIPDIHVQLWGSAILKDLHRMSKDVQHEKDAYANHVKYSENLIADQRKCVQSAHHELVNWFQGDPPVTSGPPAAPVLLMPESSVTASVPVIASTSTAMQPAGQYGQFY.

TPR repeat units follow at residues 453 to 486 (GGFYYVQGLHAFHKNSFHEAKRFLRETLKMANAE) and 493 to 526 (SCSLVLLSHVFLSIGNSKESMNMVTPAMQLASKI).

The protein belongs to the SCC4/mau-2 family. As to quaternary structure, interacts with Nipped-B to form the cohesin loading complex.

It localises to the nucleus. The protein localises to the nucleoplasm. Required for association of the cohesin complex with chromatin during interphase. Plays a role in sister chromatid cohesion and normal progression through prometaphase. The chain is MAU2 chromatid cohesion factor homolog from Drosophila melanogaster (Fruit fly).